The chain runs to 222 residues: UPF0441 protein CKO_04429 (222 aa).

Positions 177–194 (TVPKTAMAPKPATTTTVT) are enriched in low complexity. The interval 177-222 (TVPKTAMAPKPATTTTVTRGGFGESVAKQSTMQRSATGTSNRSMGG) is disordered. The segment covering 203–222 (AKQSTMQRSATGTSNRSMGG) has biased composition (polar residues).

It belongs to the UPF0441 family.

The protein is UPF0441 protein CKO_04429 of Citrobacter koseri (strain ATCC BAA-895 / CDC 4225-83 / SGSC4696).